Reading from the N-terminus, the 346-residue chain is UDP-N-acetylenolpyruvoylglucosamine reductase (346 aa).

The FAD-binding PCMH-type domain occupies 23-194 (FDVRAQFACR…TSVTFRLPKV (172 aa)). Residue arginine 170 is part of the active site. Serine 246 functions as the Proton donor in the catalytic mechanism. Glutamate 342 is an active-site residue.

Belongs to the MurB family. The cofactor is FAD.

The protein localises to the cytoplasm. The catalysed reaction is UDP-N-acetyl-alpha-D-muramate + NADP(+) = UDP-N-acetyl-3-O-(1-carboxyvinyl)-alpha-D-glucosamine + NADPH + H(+). It participates in cell wall biogenesis; peptidoglycan biosynthesis. Its function is as follows. Cell wall formation. In Paraburkholderia phytofirmans (strain DSM 17436 / LMG 22146 / PsJN) (Burkholderia phytofirmans), this protein is UDP-N-acetylenolpyruvoylglucosamine reductase.